Here is a 143-residue protein sequence, read N- to C-terminus: Large ribosomal subunit protein uL11 (143 aa).

The protein belongs to the universal ribosomal protein uL11 family. As to quaternary structure, part of the ribosomal stalk of the 50S ribosomal subunit. Interacts with L10 and the large rRNA to form the base of the stalk. L10 forms an elongated spine to which L12 dimers bind in a sequential fashion forming a multimeric L10(L12)X complex. Post-translationally, one or more lysine residues are methylated.

Functionally, forms part of the ribosomal stalk which helps the ribosome interact with GTP-bound translation factors. The protein is Large ribosomal subunit protein uL11 of Erythrobacter litoralis (strain HTCC2594).